A 1523-amino-acid chain; its full sequence is Dicer-like protein 1 (1523 aa).

Polar residues predominate over residues 24–38 (LNLSGERTISTTEPT). Positions 24 to 58 (LNLSGERTISTTEPTEGNDSSSEESGDNEQISTQR) are disordered. Residues 123–304 (LFERAKSQNT…ESATKLEVLL (182 aa)) enclose the Helicase ATP-binding domain. 136 to 143 (LDTGSGKT) contributes to the ATP binding site. Positions 249–252 (DEAH) match the DEAH box motif. Residues 444–617 (LLRQKLIKYF…GIDSEIDSIL (174 aa)) form the Helicase C-terminal domain. Residues 640-730 (ALAILARYAS…NSVYHRRLPA (91 aa)) form the Dicer dsRNA-binding fold domain. The 129-residue stretch at 879–1007 (ELLHLVHENE…VCIEPLRISA (129 aa)) folds into the PAZ domain. 2 consecutive RNase III domains span residues 1031–1190 (IALE…LSGG) and 1241–1392 (GRKV…VDSD). Mg(2+) contacts are provided by Glu-1281, Asp-1378, and Glu-1381. A DRBM domain is found at 1426-1494 (TFLQNRLTNE…SEKALSVLEN (69 aa)). Cys-1438, His-1465, Cys-1506, and Cys-1508 together coordinate Zn(2+).

The protein belongs to the helicase family. Dicer subfamily. Requires Mg(2+) as cofactor. It depends on Mn(2+) as a cofactor.

Functionally, dicer-like endonuclease involved in cleaving double-stranded RNA in the RNA interference (RNAi) pathway. Produces 21 to 25 bp dsRNAs (siRNAs) which target the selective destruction of homologous RNAs leading to sequence-specific suppression of gene expression, called post-transcriptional gene silencing (PTGS). Part of a broad host defense response against viral infection and transposons. The polypeptide is Dicer-like protein 1 (dcl1) (Aspergillus oryzae (strain ATCC 42149 / RIB 40) (Yellow koji mold)).